We begin with the raw amino-acid sequence, 77 residues long: Sec-independent protein translocase protein TatA (77 aa).

A helical membrane pass occupies residues 1 to 21; the sequence is MGSFSIWHWLVVGILVLLLFG. The segment at 41–77 is disordered; that stretch reads KGMSEDDAPTPAPKQIDAQRAPDLSATPTPTAETENR. The span at 66 to 77 shows a compositional bias: polar residues; the sequence is ATPTPTAETENR.

The protein belongs to the TatA/E family. The Tat system comprises two distinct complexes: a TatABC complex, containing multiple copies of TatA, TatB and TatC subunits, and a separate TatA complex, containing only TatA subunits. Substrates initially bind to the TatABC complex, which probably triggers association of the separate TatA complex to form the active translocon.

The protein resides in the cell inner membrane. Functionally, part of the twin-arginine translocation (Tat) system that transports large folded proteins containing a characteristic twin-arginine motif in their signal peptide across membranes. TatA could form the protein-conducting channel of the Tat system. The polypeptide is Sec-independent protein translocase protein TatA (Sphingopyxis alaskensis (strain DSM 13593 / LMG 18877 / RB2256) (Sphingomonas alaskensis)).